The following is a 467-amino-acid chain: Argininosuccinate lyase (467 aa).

2-(N(omega)-L-arginino)succinate contacts are provided by S27, N114, and T159. H160 serves as the catalytic Proton acceptor. S281 acts as the Proton donor in catalysis. Positions 289, 321, 326, and 329 each coordinate 2-(N(omega)-L-arginino)succinate.

It belongs to the lyase 1 family. Argininosuccinate lyase subfamily. In terms of assembly, homotetramer.

It catalyses the reaction 2-(N(omega)-L-arginino)succinate = fumarate + L-arginine. The protein operates within amino-acid biosynthesis; L-arginine biosynthesis; L-arginine from L-ornithine and carbamoyl phosphate: step 3/3. It participates in nitrogen metabolism; urea cycle; L-arginine and fumarate from (N(omega)-L-arginino)succinate: step 1/1. This is Argininosuccinate lyase (ASL) from Aquarana catesbeiana (American bullfrog).